Consider the following 418-residue polypeptide: Serine hydroxymethyltransferase (418 aa).

(6S)-5,6,7,8-tetrahydrofolate contacts are provided by residues Leu121 and 125 to 127 (GHL). Lys230 carries the N6-(pyridoxal phosphate)lysine modification. (6S)-5,6,7,8-tetrahydrofolate-binding positions include Glu246 and 355 to 357 (SPF).

The protein belongs to the SHMT family. In terms of assembly, homodimer. The cofactor is pyridoxal 5'-phosphate.

The protein resides in the cytoplasm. It catalyses the reaction (6R)-5,10-methylene-5,6,7,8-tetrahydrofolate + glycine + H2O = (6S)-5,6,7,8-tetrahydrofolate + L-serine. The protein operates within one-carbon metabolism; tetrahydrofolate interconversion. It participates in amino-acid biosynthesis; glycine biosynthesis; glycine from L-serine: step 1/1. Functionally, catalyzes the reversible interconversion of serine and glycine with tetrahydrofolate (THF) serving as the one-carbon carrier. This reaction serves as the major source of one-carbon groups required for the biosynthesis of purines, thymidylate, methionine, and other important biomolecules. Also exhibits THF-independent aldolase activity toward beta-hydroxyamino acids, producing glycine and aldehydes, via a retro-aldol mechanism. The protein is Serine hydroxymethyltransferase of Streptococcus pneumoniae (strain Taiwan19F-14).